A 70-amino-acid chain; its full sequence is Deleted in esophageal cancer 1 (70 aa).

Expressed in many tissues, with highest expression in prostate and testis. Reduced expression in esophageal carcinomas.

Functionally, candidate tumor suppressor. This Homo sapiens (Human) protein is Deleted in esophageal cancer 1.